A 134-amino-acid polypeptide reads, in one-letter code: Retinol-binding protein 2 (134 aa).

All-trans-retinol contacts are provided by Lys-41 and Gln-109.

Belongs to the calycin superfamily. Fatty-acid binding protein (FABP) family. As to expression, higher expression in adult small intestine and to a much lesser extent in fetal kidney.

It localises to the cytoplasm. In terms of biological role, intracellular transport of retinol. The sequence is that of Retinol-binding protein 2 (RBP2) from Homo sapiens (Human).